The sequence spans 780 residues: Cullin-1 (780 aa).

One can recognise a Cullin neddylation domain in the interval 710–771 (DRKSVISACI…EKEYMLRTEG (62 aa)). Lys724 participates in a covalent cross-link: Glycyl lysine isopeptide (Lys-Gly) (interchain with G-Cter in NEDD8).

This sequence belongs to the cullin family. In terms of assembly, component of an SCF (SKP1-CUL1-F-box protein) E3 ubiquitin ligase complex composed of cul-1, fsn-1, rpm-1 and skr-1. Interacts with Skp1-related proteins skr-1, skr-2, skr-3, skr-4, skr-7, skr-8, skr-9 and skr-10. In terms of processing, neddylated; which enhances the ubiquitination activity of SCF. As to expression, ubiquitous.

The protein localises to the cytoplasm. It participates in protein modification; protein ubiquitination. Its function is as follows. Probable core component of multiple cullin-RING-based SCF (SKP1-CUL1-F-box) E3 ubiquitin-protein ligase complexes which mediate the ubiquitination and subsequent proteasomal degradation of target proteins. As a scaffold protein may contribute to catalysis through positioning of the substrate and the ubiquitin-conjugating enzyme. Required for developmentally programmed transitions from the G1 phase of the cell cycle to the G0 phase or the apoptotic pathway. The protein is Cullin-1 (cul-1) of Caenorhabditis elegans.